The following is a 317-amino-acid chain: Ventral anterior homeobox 1 (317 aa).

Residues 1 to 62 (MEVRYSQDSE…CEKSRASSGD (62 aa)) form a disordered region. Residues 18–27 (GLKEGKEGKD) show a composition bias toward basic and acidic residues. The homeobox DNA-binding region spans 92 to 151 (PKRTRTSFTAEQLYRLEMEFQRCQYVVGRERTELARQLNLSETQVKVWFQNRRTKQKKDQ). Residues 203-248 (GPSLGITANGGSSSSSRSSAGSSGTAGGSPPLPTVTSSGTVTGLQG) form a disordered region. Positions 212–225 (GGSSSSSRSSAGSS) are enriched in low complexity. Positions 236–247 (TVTSSGTVTGLQ) are enriched in polar residues.

The protein belongs to the EMX homeobox family. Expressed in the anterior neural keel and later in the preoptic area and optic stalk.

It is found in the nucleus. Functionally, transcription factor that is required for closure of the choroid fissure and together with Vax2 is required for optic nerve differentiation and to limit retinal development to the optic cup. In Danio rerio (Zebrafish), this protein is Ventral anterior homeobox 1 (vax1).